The sequence spans 342 residues: Methylthioribose-1-phosphate isomerase (342 aa).

Substrate contacts are provided by residues 49 to 51, Arg86, and Gln187; that span reads RGA. Residue Asp228 is the Proton donor of the active site. 238-239 contributes to the substrate binding site; it reads NK.

This sequence belongs to the eIF-2B alpha/beta/delta subunits family. MtnA subfamily.

It carries out the reaction 5-(methylsulfanyl)-alpha-D-ribose 1-phosphate = 5-(methylsulfanyl)-D-ribulose 1-phosphate. Its pathway is amino-acid biosynthesis; L-methionine biosynthesis via salvage pathway; L-methionine from S-methyl-5-thio-alpha-D-ribose 1-phosphate: step 1/6. In terms of biological role, catalyzes the interconversion of methylthioribose-1-phosphate (MTR-1-P) into methylthioribulose-1-phosphate (MTRu-1-P). This Serratia proteamaculans (strain 568) protein is Methylthioribose-1-phosphate isomerase.